Here is a 119-residue protein sequence, read N- to C-terminus: Small ribosomal subunit protein uS10 (119 aa).

A2 carries the N-acetylalanine modification. A Glycyl lysine isopeptide (Lys-Gly) (interchain with G-Cter in ubiquitin) cross-link involves residue K4. At K8 the chain carries N6-succinyllysine; alternate. Residue K8 forms a Glycyl lysine isopeptide (Lys-Gly) (interchain with G-Cter in ubiquitin); alternate linkage. The residue at position 9 (T9) is a Phosphothreonine. K34 and K75 each carry N6-acetyllysine. S93 is subject to Phosphoserine.

This sequence belongs to the universal ribosomal protein uS10 family. As to quaternary structure, component of the 40S small ribosomal subunit. Post-translationally, polyubiquitinated by ZNF598 via 'Lys-63'-linked ubiquitin chains when a ribosome has stalled, initiating the ribosome quality control (RQC) pathway to degrade the potentially detrimental aberrant nascent polypeptide. Deubiquitinated by OTUD3 and USP21, antagonizing ZNF598 activity. In terms of processing, ufmylated by UFL1.

Its subcellular location is the cytoplasm. Component of the small ribosomal subunit. The ribosome is a large ribonucleoprotein complex responsible for the synthesis of proteins in the cell. The sequence is that of Small ribosomal subunit protein uS10 (RPS20) from Sus scrofa (Pig).